We begin with the raw amino-acid sequence, 616 residues long: UPF0329 protein ECU02_1540 (616 aa).

Composition is skewed to basic and acidic residues over residues 350–359 (EREKREESKG) and 369–381 (GAGE…KEED). The disordered stretch occupies residues 350–427 (EREKREESKG…RKGDGHHYKI (78 aa)). Residues 382 to 396 (GKEEEGVEAEEEESA) are compositionally biased toward acidic residues. Positions 408 to 427 (ARRKKSLKGKRKGDGHHYKI) are enriched in basic residues.

It belongs to the UPF0329 family.

The sequence is that of UPF0329 protein ECU02_1540 from Encephalitozoon cuniculi (strain GB-M1) (Microsporidian parasite).